The sequence spans 107 residues: Latency-related protein 2 (107 aa).

Pro residues predominate over residues 1-44; sequence MAPPLPRTPTPTHPHSHAPPLPRTPTPAHPHSHAPPLPRTPTPT. The tract at residues 1–63 is disordered; it reads MAPPLPRTPT…SIQHRQGKDT (63 aa). 3 tandem repeats follow at residues 2-17, 18-33, and 34-49. Positions 2-49 are 3 X 17 AA tandem repeats; sequence APPLPRTPTPTHPHSHAPPLPRTPTPAHPHSHAPPLPRTPTPTHPHSH. Over residues 46 to 58 the composition is skewed to basic residues; that stretch reads PHSHAPPRSIQHR.

The chain is Latency-related protein 2 from Homo sapiens (Human).